Here is a 305-residue protein sequence, read N- to C-terminus: tRNA dimethylallyltransferase (305 aa).

14-21 (GPTASGKS) provides a ligand contact to ATP. Residue 16–21 (TASGKS) coordinates substrate. The tract at residues 39 to 42 (DSMQ) is interaction with substrate tRNA.

The protein belongs to the IPP transferase family. Monomer. Mg(2+) serves as cofactor.

The enzyme catalyses adenosine(37) in tRNA + dimethylallyl diphosphate = N(6)-dimethylallyladenosine(37) in tRNA + diphosphate. Functionally, catalyzes the transfer of a dimethylallyl group onto the adenine at position 37 in tRNAs that read codons beginning with uridine, leading to the formation of N6-(dimethylallyl)adenosine (i(6)A). This Bradyrhizobium sp. (strain BTAi1 / ATCC BAA-1182) protein is tRNA dimethylallyltransferase.